The primary structure comprises 176 residues: uncharacterized protein (176 aa).

The segment covering 15-28 has biased composition (polar residues); that stretch reads TSSNPPASASQSTG. Disordered stretches follow at residues 15 to 100 and 125 to 176; these read TSSN…TSAG and ASLR…NLGA. Basic and acidic residues predominate over residues 43 to 52; that stretch reads FIDKVTDKPS.

This is an uncharacterized protein from Homo sapiens (Human).